The following is a 358-amino-acid chain: UDP-N-acetylglucosamine--N-acetylmuramyl-(pentapeptide) pyrophosphoryl-undecaprenol N-acetylglucosamine transferase (358 aa).

UDP-N-acetyl-alpha-D-glucosamine contacts are provided by residues 11-13 (TGG), N124, R164, S195, and Q291.

The protein belongs to the glycosyltransferase 28 family. MurG subfamily.

Its subcellular location is the cell inner membrane. The catalysed reaction is di-trans,octa-cis-undecaprenyl diphospho-N-acetyl-alpha-D-muramoyl-L-alanyl-D-glutamyl-meso-2,6-diaminopimeloyl-D-alanyl-D-alanine + UDP-N-acetyl-alpha-D-glucosamine = di-trans,octa-cis-undecaprenyl diphospho-[N-acetyl-alpha-D-glucosaminyl-(1-&gt;4)]-N-acetyl-alpha-D-muramoyl-L-alanyl-D-glutamyl-meso-2,6-diaminopimeloyl-D-alanyl-D-alanine + UDP + H(+). It participates in cell wall biogenesis; peptidoglycan biosynthesis. Functionally, cell wall formation. Catalyzes the transfer of a GlcNAc subunit on undecaprenyl-pyrophosphoryl-MurNAc-pentapeptide (lipid intermediate I) to form undecaprenyl-pyrophosphoryl-MurNAc-(pentapeptide)GlcNAc (lipid intermediate II). The protein is UDP-N-acetylglucosamine--N-acetylmuramyl-(pentapeptide) pyrophosphoryl-undecaprenol N-acetylglucosamine transferase of Leptospira borgpetersenii serovar Hardjo-bovis (strain JB197).